An 87-amino-acid chain; its full sequence is Small ribosomal subunit protein uS17 (87 aa).

Belongs to the universal ribosomal protein uS17 family. Part of the 30S ribosomal subunit.

Functionally, one of the primary rRNA binding proteins, it binds specifically to the 5'-end of 16S ribosomal RNA. The chain is Small ribosomal subunit protein uS17 from Geobacillus stearothermophilus (Bacillus stearothermophilus).